We begin with the raw amino-acid sequence, 234 residues long: Thymidylate kinase (234 aa).

21–28 (GGEGTGKS) contacts ATP.

It belongs to the thymidylate kinase family.

The catalysed reaction is dTMP + ATP = dTDP + ADP. In terms of biological role, phosphorylation of dTMP to form dTDP in both de novo and salvage pathways of dTTP synthesis. This is Thymidylate kinase from Rhizobium meliloti (strain 1021) (Ensifer meliloti).